We begin with the raw amino-acid sequence, 100 residues long: Small ribosomal subunit protein uS14c (100 aa).

It belongs to the universal ribosomal protein uS14 family. As to quaternary structure, part of the 30S ribosomal subunit.

The protein localises to the plastid. It is found in the chloroplast. In terms of biological role, binds 16S rRNA, required for the assembly of 30S particles. In Pelargonium hortorum (Common geranium), this protein is Small ribosomal subunit protein uS14c.